A 729-amino-acid polypeptide reads, in one-letter code: Probable pre-mRNA-splicing factor ATP-dependent RNA helicase DEAH3 (729 aa).

Residues Leu-75–Pro-244 form the Helicase ATP-binding domain. Gly-88 to Thr-95 contacts ATP. A DEAH box motif is present at residues Asp-191 to His-194. One can recognise a Helicase C-terminal domain in the interval Thr-269–Gly-449.

The protein belongs to the DEAD box helicase family. DEAH subfamily. PRP43 sub-subfamily.

The catalysed reaction is ATP + H2O = ADP + phosphate + H(+). In terms of biological role, may be involved in pre-mRNA splicing. This Arabidopsis thaliana (Mouse-ear cress) protein is Probable pre-mRNA-splicing factor ATP-dependent RNA helicase DEAH3.